The following is a 427-amino-acid chain: 3-phosphoshikimate 1-carboxyvinyltransferase (427 aa).

Residues Lys22, Ser23, and Arg27 each contribute to the 3-phosphoshikimate site. Phosphoenolpyruvate is bound at residue Lys22. Residues Gly96 and Arg124 each contribute to the phosphoenolpyruvate site. Ser169, Ser170, Gln171, Ser197, Asp313, Asn336, and Lys340 together coordinate 3-phosphoshikimate. Gln171 is a phosphoenolpyruvate binding site. Asp313 functions as the Proton acceptor in the catalytic mechanism. Residues Arg344, Arg386, and Lys411 each contribute to the phosphoenolpyruvate site.

It belongs to the EPSP synthase family. In terms of assembly, monomer.

It is found in the cytoplasm. The catalysed reaction is 3-phosphoshikimate + phosphoenolpyruvate = 5-O-(1-carboxyvinyl)-3-phosphoshikimate + phosphate. It participates in metabolic intermediate biosynthesis; chorismate biosynthesis; chorismate from D-erythrose 4-phosphate and phosphoenolpyruvate: step 6/7. Functionally, catalyzes the transfer of the enolpyruvyl moiety of phosphoenolpyruvate (PEP) to the 5-hydroxyl of shikimate-3-phosphate (S3P) to produce enolpyruvyl shikimate-3-phosphate and inorganic phosphate. This is 3-phosphoshikimate 1-carboxyvinyltransferase from Shigella dysenteriae.